The chain runs to 385 residues: Chaperone protein DnaJ (385 aa).

Positions 5-70 (DYYEILEITR…SKRQIYDKYG (66 aa)) constitute a J domain. The segment at 136–213 (GCKKEIHNSF…CKGSGFEISE (78 aa)) adopts a CR-type zinc-finger fold. Zn(2+) contacts are provided by Cys149, Cys152, Cys165, Cys168, Cys187, Cys190, Cys201, and Cys204. CXXCXGXG motif repeat units follow at residues 149–156 (CSDCKGTG), 165–172 (CKDCGGKG), 187–194 (CPTCKGEG), and 201–208 (CSKCKGSG).

Belongs to the DnaJ family. In terms of assembly, homodimer. Zn(2+) serves as cofactor.

The protein resides in the cytoplasm. Participates actively in the response to hyperosmotic and heat shock by preventing the aggregation of stress-denatured proteins and by disaggregating proteins, also in an autonomous, DnaK-independent fashion. Unfolded proteins bind initially to DnaJ; upon interaction with the DnaJ-bound protein, DnaK hydrolyzes its bound ATP, resulting in the formation of a stable complex. GrpE releases ADP from DnaK; ATP binding to DnaK triggers the release of the substrate protein, thus completing the reaction cycle. Several rounds of ATP-dependent interactions between DnaJ, DnaK and GrpE are required for fully efficient folding. Also involved, together with DnaK and GrpE, in the DNA replication of plasmids through activation of initiation proteins. The protein is Chaperone protein DnaJ of Helicobacter hepaticus (strain ATCC 51449 / 3B1).